The following is a 167-amino-acid chain: Large ribosomal subunit protein uL10 (167 aa).

The protein belongs to the universal ribosomal protein uL10 family. As to quaternary structure, part of the ribosomal stalk of the 50S ribosomal subunit. The N-terminus interacts with L11 and the large rRNA to form the base of the stalk. The C-terminus forms an elongated spine to which L12 dimers bind in a sequential fashion forming a multimeric L10(L12)X complex.

In terms of biological role, forms part of the ribosomal stalk, playing a central role in the interaction of the ribosome with GTP-bound translation factors. In Cytophaga hutchinsonii (strain ATCC 33406 / DSM 1761 / CIP 103989 / NBRC 15051 / NCIMB 9469 / D465), this protein is Large ribosomal subunit protein uL10.